A 391-amino-acid polypeptide reads, in one-letter code: GTPase Obg (391 aa).

The Obg domain occupies 1–159; the sequence is MKFLDQAKIF…IWVWLRLKLI (159 aa). In terms of domain architecture, OBG-type G spans 160–327; sequence ADAGLIGLPN…VLRVMATHVD (168 aa). GTP-binding positions include 166–173, 191–195, 212–215, 279–282, and 308–310; these read GLPNAGKS, FTTLH, DIPG, SKID, and SAI. Residues S173 and T193 each coordinate Mg(2+). The interval 352-391 is disordered; that stretch reads TGIDHGYNRPSAVVDWEDAPFDDDDDDDGDESGDKGQWTR. Residues 366-382 are compositionally biased toward acidic residues; the sequence is DWEDAPFDDDDDDDGDE.

The protein belongs to the TRAFAC class OBG-HflX-like GTPase superfamily. OBG GTPase family. As to quaternary structure, monomer. Requires Mg(2+) as cofactor.

It is found in the cytoplasm. An essential GTPase which binds GTP, GDP and possibly (p)ppGpp with moderate affinity, with high nucleotide exchange rates and a fairly low GTP hydrolysis rate. Plays a role in control of the cell cycle, stress response, ribosome biogenesis and in those bacteria that undergo differentiation, in morphogenesis control. The polypeptide is GTPase Obg (Rhodospirillum rubrum (strain ATCC 11170 / ATH 1.1.1 / DSM 467 / LMG 4362 / NCIMB 8255 / S1)).